The primary structure comprises 506 residues: Nondiscriminating glutamyl-tRNA synthetase EARS2, mitochondrial (506 aa).

The transit peptide at 1 to 41 (MAALLRRLLQRGRPLAASGRRVGRREARLGTGPGVAVRVRF) directs the protein to the mitochondrion. 40-42 (RFA) contributes to the L-glutamate binding site. The 'HIGH' region signature appears at 45–53 (PTGFLHLGG). H50 is a binding site for ATP. Residues E76, 228–232 (YHLAC), and R246 contribute to the L-glutamate site. E249 contacts ATP. An N6-succinyllysine modification is found at K256. An ATP-binding site is contributed by 284-288 (KLSKR). The short motif at 284–288 (KLSKR) is the 'KMSKS' region element. N6-acetyllysine is present on K486.

Belongs to the class-I aminoacyl-tRNA synthetase family. Glutamate--tRNA ligase type 1 subfamily.

Its subcellular location is the mitochondrion matrix. It carries out the reaction tRNA(Glx) + L-glutamate + ATP = L-glutamyl-tRNA(Glx) + AMP + diphosphate. The catalysed reaction is tRNA(Glu) + L-glutamate + ATP = L-glutamyl-tRNA(Glu) + AMP + diphosphate. It catalyses the reaction tRNA(Gln) + L-glutamate + ATP = L-glutamyl-tRNA(Gln) + AMP + diphosphate. Functionally, non-discriminating glutamyl-tRNA synthetase that catalyzes aminoacylation of both mitochondrial tRNA(Glu) and tRNA(Gln) and participates in RNA aminoacylation for mitochondrial protein translation. Attachs glutamate to tRNA(Glu) or tRNA(Gln) in a two-step reaction: glutamate is first activated by ATP to form Glu-AMP and then transferred to the acceptor end of tRNA(Glu) or tRNA(Gln). In vitro, cytoplasmic tRNA(Gln) is slightly glutamylated, but with low activity. This is Nondiscriminating glutamyl-tRNA synthetase EARS2, mitochondrial from Macaca fascicularis (Crab-eating macaque).